The primary structure comprises 271 residues: MASLEIIKLEWATPIFKVVEHSQDGLYILLQGQISWQNSSQTYDLDEGNMLFLRRGSYAVRCGTKEPCQLLWIPLPGSFLSTFLHRFGSLLSEIRRDNATPKPLLIFNISPILSQSIQNLCAILERSDFPSVLTQLRIEELLLLLAFSSQGALFLSALRHLGNRPEERLQKFMEENYLQGWKLSKFAREFGMGLTTFKELFGTVYGISPRAWISERRILYAHQLLLNGKMSIVDIAMEAGFSSQSYFTQSYRRRFGCTPSQARLTKIATTG.

One can recognise an HTH araC/xylS-type domain in the interval 167 to 265; the sequence is ERLQKFMEEN…GCTPSQARLT (99 aa). DNA-binding regions (H-T-H motif) lie at residues 184-205 and 232-255; these read SKFA…GTVY and IVDI…RRRF.

Transcriptional activator of the Yersinia virulence regulon. The chain is Virulence regulon transcriptional activator VirF (virF) from Yersinia enterocolitica.